A 344-amino-acid chain; its full sequence is tRNA(Ile)-lysidine synthase (344 aa).

43 to 48 (SGGADS) lines the ATP pocket.

This sequence belongs to the tRNA(Ile)-lysidine synthase family.

It localises to the cytoplasm. It catalyses the reaction cytidine(34) in tRNA(Ile2) + L-lysine + ATP = lysidine(34) in tRNA(Ile2) + AMP + diphosphate + H(+). Ligates lysine onto the cytidine present at position 34 of the AUA codon-specific tRNA(Ile) that contains the anticodon CAU, in an ATP-dependent manner. Cytidine is converted to lysidine, thus changing the amino acid specificity of the tRNA from methionine to isoleucine. This chain is tRNA(Ile)-lysidine synthase, found in Bordetella parapertussis (strain 12822 / ATCC BAA-587 / NCTC 13253).